The chain runs to 128 residues: ADA histone acetyltransferase complex component 2 (128 aa).

It localises to the cytoplasm. Its subcellular location is the nucleus. In Saccharomyces cerevisiae (strain ATCC 204508 / S288c) (Baker's yeast), this protein is ADA histone acetyltransferase complex component 2 (AHC2).